The following is a 381-amino-acid chain: Layilin (381 aa).

Residues 1–24 form the signal peptide; it reads MQPGAALQAMLLAVLLAKPRDSKG. Residues 25 to 235 lie on the Extracellular side of the membrane; the sequence is RLLSASDLDP…ERREAALNLA (211 aa). The region spanning 45–185 is the C-type lectin domain; the sequence is TRRPCYKVIY…CNMKNNFICK (141 aa). Intrachain disulfides connect Cys-71–Cys-184 and Cys-150–Cys-176. N-linked (GlcNAc...) asparagine glycosylation is present at Asn-117. Residues 236–256 form a helical membrane-spanning segment; it reads YILIPSIPLFLLLVVTSAVCW. Topologically, residues 257 to 381 are cytoplasmic; that stretch reads VWICRRKREQ…SGWVENEIYY (125 aa). Phosphoserine is present on residues Ser-286 and Ser-299. Residues 330-374 are interaction with NF2; it reads DYENIAVNPSESGFVTLASMESGFVTNDIYEFSPDRMGRSKESGW. The segment at 337 to 381 is interaction with TLN1; the sequence is NPSESGFVTLASMESGFVTNDIYEFSPDRMGRSKESGWVENEIYY. 5 consecutive repeat copies span residues 340 to 344, 350 to 354, 356 to 359, 371 to 375, and 377 to 380. Residues 340-375 are 3 X 5 AA repeats of E-S-G-X-V; the sequence is ESGFVTLASMESGFVTNDIYEFSPDRMGRSKESGWV. The 2 X 4 AA repeats of N-X-I-Y stretch occupies residues 356-380; sequence NDIYEFSPDRMGRSKESGWVENEIY.

In terms of assembly, interacts with TLN1. Interacts with NF2 and RDX.

It localises to the membrane. Its function is as follows. Receptor for hyaluronate. The polypeptide is Layilin (Layn) (Mus musculus (Mouse)).